A 232-amino-acid chain; its full sequence is Uracil phosphoribosyltransferase (232 aa).

GTP is bound at residue 38-42 (KGLVR). 5-phospho-alpha-D-ribose 1-diphosphate contacts are provided by residues arginine 87, arginine 112, and 140 to 148 (DPMIATGST). Residues isoleucine 204 and 209–211 (GDA) contribute to the uracil site. Aspartate 210 contacts 5-phospho-alpha-D-ribose 1-diphosphate.

It belongs to the UPRTase family. It depends on Mg(2+) as a cofactor.

It carries out the reaction UMP + diphosphate = 5-phospho-alpha-D-ribose 1-diphosphate + uracil. The protein operates within pyrimidine metabolism; UMP biosynthesis via salvage pathway; UMP from uracil: step 1/1. With respect to regulation, allosterically activated by GTP. Catalyzes the conversion of uracil and 5-phospho-alpha-D-ribose 1-diphosphate (PRPP) to UMP and diphosphate. The polypeptide is Uracil phosphoribosyltransferase (Methanococcus vannielii (strain ATCC 35089 / DSM 1224 / JCM 13029 / OCM 148 / SB)).